Reading from the N-terminus, the 457-residue chain is Keratin, type II cytoskeletal 7 (457 aa).

An N-acetylserine modification is found at Ser-2. Ser-2 carries the post-translational modification Phosphoserine. The head stretch occupies residues 2–84 (SIHFSSRSTA…DPTIQQVRQE (83 aa)). O-linked (GlcNAc) serine glycosylation is present at Ser-7. Dimethylated arginine; alternate is present on Arg-15. Arg-15 is modified (omega-N-methylarginine; alternate). Phosphoserine is present on residues Ser-47 and Ser-65. Residues 84–120 (EEREQIKTLNNKFASFIDKVRFLEQQNKMLETKWALL) are coil 1A. The IF rod domain maps to 85–397 (EREQIKTLNN…KLLEGEESRL (313 aa)). At Thr-91 the chain carries Phosphothreonine. The linker 1 stretch occupies residues 121–138 (QEQKSAKSSQLPRIFEAQ). A Glycyl lysine isopeptide (Lys-Gly) (interchain with G-Cter in SUMO2) cross-link involves residue Lys-124. The interval 139 to 230 (IAGLRQQLET…TLHETELAEL (92 aa)) is coil 1B. Lys-173 is subject to N6-acetyllysine. Ser-211, Ser-246, and Ser-248 each carry phosphoserine. The segment at 231 to 254 (QSQISDTSVVLSMDNSRSLDLDGI) is linker 12. Positions 255 to 393 (IADVKAQYEE…ATYRKLLEGE (139 aa)) are coil 2. Residues Lys-259 and Lys-280 each participate in a glycyl lysine isopeptide (Lys-Gly) (interchain with G-Cter in SUMO2) cross-link. Residue Thr-283 is modified to Phosphothreonine. Residues Lys-290 and Lys-325 each participate in a glycyl lysine isopeptide (Lys-Gly) (interchain with G-Cter in SUMO2) cross-link. The segment at 394–457 (ESRLSGDGMG…TSTTRRGTHN (64 aa)) is tail.

It belongs to the intermediate filament family. Heterotetramer of two type I and two type II keratins. Interacts with eukaryotic translation initiator factor 3 (eIF3) subunit EIF3S10. Interacts with GPER1. In terms of processing, arg-15 is dimethylated, probably to asymmetric dimethylarginine. Expressed in most simple epithelia tested including liver, lactating mammary gland, lung, kidney, stomach, duodenum, colon, oviduct, uterus, pancreas, epididymis, prostate, preputial gland and mesothelium, and in most stratified epithelia tested including dorsal skin, paw/toe, tail, tongue, cervix, forestomach, and bladder. Also expressed in Henle layer of the inner root sheath of whisker follicle.

Its function is as follows. Blocks interferon-dependent interphase and stimulates DNA synthesis in cells. This is Keratin, type II cytoskeletal 7 from Mus musculus (Mouse).